The following is a 273-amino-acid chain: MALKSFNPITPSLRELVQVDRTSLWKGRPFKALTKGISKTGGRNNQGRITSWQRGGGHKRLYRVIDFKRNKLDISAIVERIEYDPNRTAFIALIKYEDGEHAYILAPQKLVVGDKIISSKDADIKIGNCLPLRYIPIGTTLHNVEMKVGKGGQIARSAGTSVDLVGKDSGYAQIKLKSGEFRLVPLDCMATIGTVSNPDQKNINLGKAGRNRWLGWRPHVRGVAMNPVDHPHGGGEGKTSGGRHPVTPWGFPTKGKKTRKNKRTSKFIIKKRK.

Residues 228 to 273 (VDHPHGGGEGKTSGGRHPVTPWGFPTKGKKTRKNKRTSKFIIKKRK) form a disordered region. Residues 254 to 273 (KGKKTRKNKRTSKFIIKKRK) are compositionally biased toward basic residues.

This sequence belongs to the universal ribosomal protein uL2 family. In terms of assembly, part of the 50S ribosomal subunit. Forms a bridge to the 30S subunit in the 70S ribosome.

Functionally, one of the primary rRNA binding proteins. Required for association of the 30S and 50S subunits to form the 70S ribosome, for tRNA binding and peptide bond formation. It has been suggested to have peptidyltransferase activity; this is somewhat controversial. Makes several contacts with the 16S rRNA in the 70S ribosome. The sequence is that of Large ribosomal subunit protein uL2 from Rickettsia bellii (strain OSU 85-389).